The sequence spans 462 residues: tRNA modification GTPase MnmE (462 aa).

The (6S)-5-formyl-5,6,7,8-tetrahydrofolate site is built by Arg-26, Glu-91, and Arg-130. The TrmE-type G domain maps to Gly-228 to Phe-382. Asn-238 contacts K(+). Residues Asn-238 to Gln-243, Thr-257 to Thr-263, and Asp-282 to Gly-285 each bind GTP. Residue Ser-242 participates in Mg(2+) binding. 3 residues coordinate K(+): Thr-257, Ile-259, and Thr-262. Thr-263 is a Mg(2+) binding site. Lys-462 is a binding site for (6S)-5-formyl-5,6,7,8-tetrahydrofolate.

Belongs to the TRAFAC class TrmE-Era-EngA-EngB-Septin-like GTPase superfamily. TrmE GTPase family. As to quaternary structure, homodimer. Heterotetramer of two MnmE and two MnmG subunits. The cofactor is K(+).

The protein resides in the cytoplasm. Its function is as follows. Exhibits a very high intrinsic GTPase hydrolysis rate. Involved in the addition of a carboxymethylaminomethyl (cmnm) group at the wobble position (U34) of certain tRNAs, forming tRNA-cmnm(5)s(2)U34. The chain is tRNA modification GTPase MnmE from Streptococcus agalactiae.